The chain runs to 99 residues: Integration host factor subunit alpha (99 aa).

The tract at residues 49–72 (FGNFDLRDKNQRPGRNPKTGEDIP) is disordered.

This sequence belongs to the bacterial histone-like protein family. In terms of assembly, heterodimer of an alpha and a beta chain.

Its function is as follows. This protein is one of the two subunits of integration host factor, a specific DNA-binding protein that functions in genetic recombination as well as in transcriptional and translational control. The protein is Integration host factor subunit alpha of Escherichia coli O9:H4 (strain HS).